The following is a 364-amino-acid chain: Peroxisome biogenesis protein 3-2 (364 aa).

The chain crosses the membrane as a helical span at residues 15–32 (VLVTAGCLGSGYLLYKLY). A coiled-coil region spans residues 33-62 (NSHTRRLADLERELAHERENDEIIKTQMKA).

The protein belongs to the peroxin-3 family.

Its subcellular location is the peroxisome membrane. Its function is as follows. Involved in morphology determination of peroxisomes, but not in import of peroxisomal matrix proteins. May act as a docking factor for PEX19 and be necessary for the import of peroxisomal membrane proteins in the peroxisomes. The protein is Peroxisome biogenesis protein 3-2 (PEX3-2) of Arabidopsis thaliana (Mouse-ear cress).